The primary structure comprises 607 residues: CUB and zona pellucida-like domain-containing protein 1 (607 aa).

Residues 1–19 form the signal peptide; it reads MEVTGRLFIWAILAVSCRA. At 20 to 568 the chain is on the lumenal side; sequence QLNSTAAEGR…AEISKQPLSH (549 aa). An N-linked (GlcNAc...) asparagine glycan is attached at asparagine 22. A disulfide bridge links cysteine 32 with cysteine 58. CUB domains are found at residues 32–146 and 154–265; these read CTAS…YFFS and CGGY…YAST. Asparagine 67 carries N-linked (GlcNAc...) asparagine glycosylation. Disulfide bonds link cysteine 85-cysteine 107 and cysteine 154-cysteine 180. Asparagine 195 carries an N-linked (GlcNAc...) asparagine glycan. Cysteine 207 and cysteine 229 are oxidised to a cystine. Residues 276–519 form the ZP domain; sequence SCASDKMRVI…SRCNQGCVSR (244 aa). N-linked (GlcNAc...) asparagine glycosylation occurs at asparagine 419. Cysteine 442 and cysteine 498 form a disulfide bridge. The chain crosses the membrane as a helical span at residues 569-589; the sequence is LHLFSFMVLALNVVIVVTATV. Residues 590-607 lie on the Cytoplasmic side of the membrane; the sequence is RHFLNRWKDHGYQKLQVY.

In terms of tissue distribution, expressed predominantly in epithelium of uterus and oviduct.

It is found in the zymogen granule membrane. In terms of biological role, localized to zymogen granules, where it functions in trypsinogen activation. May indirectly regulate cell motility, cell-cell and cell/extracellular matrix interactions. This chain is CUB and zona pellucida-like domain-containing protein 1, found in Rattus norvegicus (Rat).